Reading from the N-terminus, the 442-residue chain is tRNA(Ile)-lysidine synthase (442 aa).

30 to 35 contacts ATP; sequence SGGLDS.

The protein belongs to the tRNA(Ile)-lysidine synthase family.

It is found in the cytoplasm. The enzyme catalyses cytidine(34) in tRNA(Ile2) + L-lysine + ATP = lysidine(34) in tRNA(Ile2) + AMP + diphosphate + H(+). Ligates lysine onto the cytidine present at position 34 of the AUA codon-specific tRNA(Ile) that contains the anticodon CAU, in an ATP-dependent manner. Cytidine is converted to lysidine, thus changing the amino acid specificity of the tRNA from methionine to isoleucine. This chain is tRNA(Ile)-lysidine synthase, found in Pseudomonas fluorescens (strain Pf0-1).